The primary structure comprises 155 residues: Small ribosomal subunit protein eS19B (155 aa).

It belongs to the eukaryotic ribosomal protein eS19 family.

In Drosophila melanogaster (Fruit fly), this protein is Small ribosomal subunit protein eS19B (RpS19b).